The primary structure comprises 208 residues: UPF0637 protein BcerKBAB4_3786 (208 aa).

This sequence belongs to the UPF0637 family.

The protein is UPF0637 protein BcerKBAB4_3786 of Bacillus mycoides (strain KBAB4) (Bacillus weihenstephanensis).